Here is a 914-residue protein sequence, read N- to C-terminus: Probable dipeptidyl-aminopeptidase B (914 aa).

The segment at 1-82 is disordered; sequence MGAEKRINDE…GLPPPSGAQR (82 aa). Residues 1–88 are Cytoplasmic-facing; it reads MGAEKRINDE…GAQRTPKKVS (88 aa). Positions 26–38 are enriched in low complexity; it reads DSTSTASISLALI. The helical; Signal-anchor for type II membrane protein transmembrane segment at 89–109 threads the bilayer; that stretch reads IIFWLVAALCVGGWLVAFFVF. The Vacuolar segment spans residues 110–914; that stretch reads MGSPKKDSDK…RSLLKRMSNA (805 aa). N-linked (GlcNAc...) asparagine glycosylation is found at Asn-128, Asn-295, Asn-347, and Asn-617. Residue Ser-751 is the Charge relay system of the active site. Residue Asn-810 is glycosylated (N-linked (GlcNAc...) asparagine). Active-site charge relay system residues include Asp-828 and His-861. Residue Asn-897 is glycosylated (N-linked (GlcNAc...) asparagine).

The protein belongs to the peptidase S9B family.

It is found in the vacuole membrane. The catalysed reaction is Release of an N-terminal dipeptide, Xaa-Yaa-|-Zaa-, from a polypeptide, preferentially when Yaa is Pro, provided Zaa is neither Pro nor hydroxyproline.. Type IV dipeptidyl-peptidase which removes N-terminal dipeptides sequentially from polypeptides having unsubstituted N-termini provided that the penultimate residue is proline. In Uncinocarpus reesii (strain UAMH 1704), this protein is Probable dipeptidyl-aminopeptidase B (DAPB).